Consider the following 94-residue polypeptide: uncharacterized protein (94 aa).

This sequence belongs to the phD/YefM antitoxin family.

This is an uncharacterized protein from Synechocystis sp. (strain ATCC 27184 / PCC 6803 / Kazusa).